The sequence spans 739 residues: Poly(A) polymerase gamma (739 aa).

Lysine 2 bears the N6-acetyllysine mark. Position 23 is a phosphoserine (serine 23). ATP-binding positions include 99-101 (FGS), threonine 108, 112-114 (DID), aspartate 166, lysine 227, tyrosine 236, and 245-246 (GV). Aspartate 112, aspartate 114, and aspartate 166 together coordinate Mg(2+). The tract at residues 506 to 566 (KSLSDVSRSS…PTGEIERSSA (61 aa)) is disordered. 2 stretches are compositionally biased toward polar residues: residues 509–531 (SDVSRSSGGLQSKRSSLDSTCLD) and 538–556 (SGTPFNSPVSANKPSNPDS). The residue at position 524 (serine 524) is a Phosphoserine. Serine 602 and serine 651 each carry phosphoserine. A Phosphothreonine modification is found at threonine 657. The segment covering 677 to 688 (SRAAEDRKRKPM) has biased composition (basic and acidic residues). Residues 677-725 (SRAAEDRKRKPMDSIGGESMPIPTIDTARKKRLPSKELPDSSSPVPANN) form a disordered region. Serine 711 is subject to Phosphoserine.

This sequence belongs to the poly(A) polymerase family. Mg(2+) serves as cofactor. Requires Mn(2+) as cofactor.

It is found in the nucleus. The catalysed reaction is RNA(n) + ATP = RNA(n)-3'-adenine ribonucleotide + diphosphate. In terms of biological role, responsible for the post-transcriptional adenylation of the 3'-terminal of mRNA precursors and several small RNAs including signal recognition particle (SRP) RNA, nuclear 7SK RNA, U2 small nuclear RNA, and ribosomal 5S RNA. The protein is Poly(A) polymerase gamma (Papolg) of Mus musculus (Mouse).